The chain runs to 369 residues: Ribonuclease D (369 aa).

In terms of domain architecture, 3'-5' exonuclease spans 4–168 (EIITTTAQLH…CLEKLQQQLE (165 aa)). Positions 207-286 (DRQGLAIIKA…TQVISQDEST (80 aa)) constitute an HRDC domain.

The protein belongs to the RNase D family. A divalent metal cation serves as cofactor.

The protein localises to the cytoplasm. It carries out the reaction Exonucleolytic cleavage that removes extra residues from the 3'-terminus of tRNA to produce 5'-mononucleotides.. Its function is as follows. Exonuclease involved in the 3' processing of various precursor tRNAs. Initiates hydrolysis at the 3'-terminus of an RNA molecule and releases 5'-mononucleotides. The chain is Ribonuclease D from Psychromonas ingrahamii (strain DSM 17664 / CCUG 51855 / 37).